The chain runs to 345 residues: Protein RecA (345 aa).

Gly66 to Thr73 serves as a coordination point for ATP.

The protein belongs to the RecA family.

The protein localises to the cytoplasm. Its function is as follows. Can catalyze the hydrolysis of ATP in the presence of single-stranded DNA, the ATP-dependent uptake of single-stranded DNA by duplex DNA, and the ATP-dependent hybridization of homologous single-stranded DNAs. It interacts with LexA causing its activation and leading to its autocatalytic cleavage. This Frankia casuarinae (strain DSM 45818 / CECT 9043 / HFP020203 / CcI3) protein is Protein RecA.